A 558-amino-acid polypeptide reads, in one-letter code: MTGFAEIIISPASFIYFPLLILVGHALIFILNTLRPKAFPPGPRGLPGLGNLLQVDRIFPFLTYGKWAKDYGSDTPLGVKKGATNVVVLNSSRLVRELFEKRGAVYSDRPWQFMNNTWIFKDDLKAAIFQNSSPWLTSWRRDFNKNFGPAAITRLRPIYEAETARLLVKLLEAPTASGKDLEAILVCWMMSVPCLGVCGRRPDSMGDHGFEIKQFRHCSDEYATLVAPNAGDLFPFLRYLPEFFGMAEWKERARAVREAVLNTGTQFLSAAREQRAALDEGKSIAWESVLAKMLREQREKNDDMFTVTDMGNTAFHIVSAATNTSLAVFSIMLLILAKDPQLQQRVRNEVLEVSGGATPTATDLSSLKYTEAFWNEVHRWRPVAPQGVAHAPSQDDIYNGHRIPKGTAIIMNVWNIHHSEEDYDEPEEFIPERFLQHPLGLRSDHTLDAAHLEASASRVTWDFGAGRRICPGMHSAKHSLLLGLAKVLWAFDILPPEGKEIDLSLETGFVQEIALHPKELNVVLKLRDGRTKQDLMDHYSQTYAAEAEVMGWKDGLYQ.

Residues proline 11–leucine 31 traverse the membrane as a helical segment. Cysteine 470 is a binding site for heme.

This sequence belongs to the cytochrome P450 family. The cofactor is heme.

It localises to the membrane. It participates in secondary metabolite biosynthesis. Its function is as follows. Cytochrome P450 monooxygenase; part of the gene cluster that mediates the biosynthesis of gregatin A, a fungal polyketide featuring an alkylated furanone core. The PKS grgA synthesizes C11 and C4 polyketide chains in the presence and absence of the trans-enoyl reductase grgB, respectively. The polyketide transferase grgF is then responsible for the fusion of the two carbon chains to produce the furanone skeleton of gregatin A. Next, the cytochrome P450 monooxygenase grgG performs the oxidative cyclization to furnish the gregatin scaffold and leads to the formation of desmethylgregatin A. In this transformation, grgG initially abstracts a hydrogen atom from C-8 to generate a substrate radical, from which one electron is transferred to the iron-heme center to yield a carbocationic species. Heterocyclization along with double-bond isomerizations provides desmethylgregatin A with the furanone ring. Alternatively, grgG might provide hydroxylation at the C-8 radical, which is followed by dehydration to give the cyclized desmethylgregatin A. Finally, the O-methyltransferase grgD methylates the carboxyl group of desmethylgregatin A to provide gregatin A. This is Cytochrome P450 monooxygenase grgG (grgG) from Penicillium sp.